A 1139-amino-acid chain; its full sequence is Hapless 2 (1139 aa).

A signal peptide spans 1 to 22 (MCRAIAVALIVYLAQHYILAHA). Topologically, residues 23 to 630 (EVIASGRLEK…TKKCWSKFGR (608 aa)) are extracellular. Cystine bridges form between Cys-33–Cys-44, Cys-136–Cys-164, Cys-147–Cys-210, Cys-165–Cys-383, Cys-167–Cys-190, Cys-366–Cys-390, and Cys-475–Cys-482. Residues 241-272 (APSPTTATTSATPRTNNSSSANSTNSTNSPAP) show a composition bias toward low complexity. Positions 241–283 (APSPTTATTSATPRTNNSSSANSTNSTNSPAPQFLSPPAPSTR) are disordered. A glycan (N-linked (GlcNAc...) asparagine) is linked at Asn-497. Cys-515 and Cys-556 are disulfide-bonded. Residue Thr-577 is glycosylated (O-linked (GlcNAc...) threonine). A helical membrane pass occupies residues 631–651 (LLGIIGGALVGLGLLAVALKF). Residues 652 to 1139 (GWLASLAASC…PVYDWQAPPK (488 aa)) are Cytoplasmic-facing. Disordered regions lie at residues 689–719 (GGGQ…AEVA) and 741–1139 (HGGG…APPK). Over residues 753–767 (QHADTRHLQDRDSRA) the composition is skewed to basic and acidic residues. Residues 770–789 (GGASIGSSSAGGSSSLSSYS) are compositionally biased toward low complexity. Positions 829–851 (WDARGRSPRVADEHGSPRQRYDG) are enriched in basic and acidic residues. The segment covering 868–884 (YDGGSGGGGGGGGGGYG) has biased composition (gly residues). Over residues 887-904 (APPPQGPPPHPVGAPPPP) the composition is skewed to pro residues. Composition is skewed to gly residues over residues 919-943 (PGGG…GVDQ) and 955-965 (RGGGGPGGMRG). The segment covering 978 to 991 (GPHPHAPPPPPPPQ) has biased composition (pro residues). Basic and acidic residues predominate over residues 1018–1029 (GREEEAGGDRRG). Positions 1040–1049 (GGRGAGGGRG) are enriched in gly residues. Over residues 1054–1067 (IGSPPPGPLQPPEY) the composition is skewed to pro residues. 2 stretches are compositionally biased toward gly residues: residues 1078 to 1096 (GAGG…GGVG) and 1106 to 1118 (GGRG…GRGR).

This sequence belongs to the HAP2/GCS1 family. Monomer. Homotrimer. Membrane contact and insertion (via its extracellular domain) into a lipid membrane probably triggers trimerization. The protein present at the cell membrane is rapidly degraded after fusion between male (minus) and female (plus) gametes, contrary to the protein present in intracellular pools. This may represent a mechanism to avoid fusion of several male gametes with a single female gamete. Post-translationally, N-glycosylated.

It is found in the cell membrane. Its subcellular location is the cell projection. The protein resides in the cytoplasmic vesicle membrane. Functionally, during fertilization, required on male (minus) gametes for their fusion with female (plus) gametes. Required for membrane fusion, but not for the initial adhesion between gametes. Inserts (via its extracellular domain) into lipid membranes (in vitro). Probably initiates the fusion of gamete cell membranes by inserting its extracellular domain into the cell membrane of a female gamete. This chain is Hapless 2, found in Chlamydomonas reinhardtii (Chlamydomonas smithii).